A 359-amino-acid polypeptide reads, in one-letter code: GDSL esterase/lipase At5g03610 (359 aa).

Positions 1–22 (MDSLIKLFFCLFIFLCTSLLFG) are cleaved as a signal peptide. Serine 50 serves as the catalytic Nucleophile. N-linked (GlcNAc...) asparagine glycosylation is found at asparagine 136, asparagine 236, and asparagine 259. Active-site residues include aspartate 332 and histidine 335.

It belongs to the 'GDSL' lipolytic enzyme family.

Its subcellular location is the secreted. In Arabidopsis thaliana (Mouse-ear cress), this protein is GDSL esterase/lipase At5g03610.